Reading from the N-terminus, the 325-residue chain is D site-binding protein (325 aa).

Disordered stretches follow at residues 1-99 (MARP…APGL), 127-200 (GLPP…DTVE), and 229-255 (RFSE…EQKD). The span at 17 to 28 (GPAGTPPGGGAL) shows a compositional bias: gly residues. Composition is skewed to low complexity over residues 29–38 (LGLRSLLQGT) and 57–80 (ALPA…PAGA). Position 86 is a phosphoserine (S86). Pro residues predominate over residues 129–153 (PPSPPPPGGPSPEPSPARTPAPSPG). Over residues 157–167 (CGSASPRSSPG) the composition is skewed to low complexity. Positions 255–318 (DEKYWSRRYK…SHYRAVLSRY (64 aa)) constitute a bZIP domain. A basic motif region spans residues 257-279 (KYWSRRYKNNEAAKRSRDARRLK). Residues 283–297 (ISVRAAFLEKENALL) are leucine-zipper.

This sequence belongs to the bZIP family. PAR subfamily. Binds DNA as a homodimer or a heterodimer. Can form a heterodimer with TEF. In terms of tissue distribution, ubiquitously expressed. Expressed in the suprachiasmatic nuclei (SCN) and in most peripheral tissues, with a strong circadian rhythmicity.

The protein localises to the nucleus. In terms of biological role, this transcriptional activator recognizes and binds to the sequence 5'-RTTAYGTAAY-3' found in the promoter of genes such as albumin, CYP2A4 and CYP2A5. It is not essential for circadian rhythm generation, but modulates important clock output genes. May be a direct target for regulation by the circadian pacemaker component clock. May affect circadian period and sleep regulation. The polypeptide is D site-binding protein (DBP) (Homo sapiens (Human)).